The sequence spans 305 residues: GMP synthase [glutamine-hydrolyzing] subunit B (305 aa).

Positions 2–184 (VDANAFIDEA…LPLPEEISER (183 aa)) constitute a GMPS ATP-PPase domain. 29–35 (SGGVDSS) is an ATP binding site.

In terms of assembly, heterodimer composed of a glutamine amidotransferase subunit (A) and a GMP-binding subunit (B).

The enzyme catalyses XMP + L-glutamine + ATP + H2O = GMP + L-glutamate + AMP + diphosphate + 2 H(+). Its pathway is purine metabolism; GMP biosynthesis; GMP from XMP (L-Gln route): step 1/1. Its function is as follows. Catalyzes the synthesis of GMP from XMP. This chain is GMP synthase [glutamine-hydrolyzing] subunit B, found in Methanocella arvoryzae (strain DSM 22066 / NBRC 105507 / MRE50).